Consider the following 422-residue polypeptide: Serine--tRNA ligase (422 aa).

An L-serine-binding site is contributed by 229–231 (TAE). Residue 260 to 262 (RKE) coordinates ATP. An L-serine-binding site is contributed by glutamate 283. Residue 347 to 350 (EISS) coordinates ATP. Serine 383 lines the L-serine pocket.

The protein belongs to the class-II aminoacyl-tRNA synthetase family. Type-1 seryl-tRNA synthetase subfamily. As to quaternary structure, homodimer. The tRNA molecule binds across the dimer.

The protein resides in the cytoplasm. It catalyses the reaction tRNA(Ser) + L-serine + ATP = L-seryl-tRNA(Ser) + AMP + diphosphate + H(+). The catalysed reaction is tRNA(Sec) + L-serine + ATP = L-seryl-tRNA(Sec) + AMP + diphosphate + H(+). It functions in the pathway aminoacyl-tRNA biosynthesis; selenocysteinyl-tRNA(Sec) biosynthesis; L-seryl-tRNA(Sec) from L-serine and tRNA(Sec): step 1/1. Its function is as follows. Catalyzes the attachment of serine to tRNA(Ser). Is also able to aminoacylate tRNA(Sec) with serine, to form the misacylated tRNA L-seryl-tRNA(Sec), which will be further converted into selenocysteinyl-tRNA(Sec). In Geobacter sulfurreducens (strain ATCC 51573 / DSM 12127 / PCA), this protein is Serine--tRNA ligase.